The following is a 434-amino-acid chain: [Pyruvate dehydrogenase (acetyl-transferring)] kinase isozyme 1, mitochondrial (434 aa).

The N-terminal 26 residues, Met1–Leu26, are a transit peptide targeting the mitochondrion. Position 136 is a phosphotyrosine; by FGFR1 (Tyr136). In terms of domain architecture, Histidine kinase spans Thr161–Ser391. Tyr241 is subject to Phosphotyrosine; by FGFR1, ABL1, FLT3 and JAK2. Phosphotyrosine; by FGFR1 is present on Tyr242. ATP contacts are provided by residues Glu277 to Arg284, Asp316, Ser335 to Thr336, and Gly352 to Leu357. Position 336 is a phosphothreonine (Thr336). Lys403 carries the N6-succinyllysine modification.

Belongs to the PDK/BCKDK protein kinase family. In terms of assembly, homodimer, and heterodimer with PDK2. Interacts with the pyruvate dehydrogenase complex subunit DLAT, and is part of the multimeric pyruvate dehydrogenase complex that contains multiple copies of pyruvate dehydrogenase (E1), dihydrolipoamide acetyltransferase (DLAT, E2) and lipoamide dehydrogenase (DLD, E3). Interacts with phosphoglycerate kinase PGK1; the interaction is direct, occurs under hypoxic conditions and leads to PDK1-mediated inhibition of pyruvate dehydrogenase complex activity. Phosphorylated by constitutively activated ABL1, FGFR1, FLT3 and JAK2 (in vitro), and this may also occur in cancer cells that express constitutively activated ABL1, FGFR1, FLT3 and JAK2. Phosphorylation at Tyr-241 and Tyr-242 strongly increases kinase activity, while phosphorylation at Tyr-136 has a lesser effect. Phosphorylated under hypoxic conditions at Thr-336 by phosphoglycerate kinase PGK1 which has an activating effect.

It is found in the mitochondrion matrix. It carries out the reaction L-seryl-[pyruvate dehydrogenase E1 alpha subunit] + ATP = O-phospho-L-seryl-[pyruvate dehydrogenase E1 alpha subunit] + ADP + H(+). Functionally, kinase that plays a key role in regulation of glucose and fatty acid metabolism and homeostasis via phosphorylation of the pyruvate dehydrogenase subunits PDHA1 and PDHA2. This inhibits pyruvate dehydrogenase activity, and thereby regulates metabolite flux through the tricarboxylic acid cycle, down-regulates aerobic respiration and inhibits the formation of acetyl-coenzyme A from pyruvate. Plays an important role in cellular responses to hypoxia and is important for cell proliferation under hypoxia. This Mus musculus (Mouse) protein is [Pyruvate dehydrogenase (acetyl-transferring)] kinase isozyme 1, mitochondrial (Pdk1).